Here is a 367-residue protein sequence, read N- to C-terminus: RNA-binding protein 48 (367 aa).

The 79-residue stretch at 46–124 (QYLLIQGVPA…GLLHVCYAPE (79 aa)) folds into the RRM domain. Residues 217-228 (PVDRASDSSKDG) show a composition bias toward basic and acidic residues. Disordered regions lie at residues 217 to 243 (PVDRASDSSKDGRNHHKTMGHYNHNGS), 277 to 303 (RTTQLQERKRRREDDRKLGTFLQTNPS), and 339 to 367 (EVISSVPKPPEDKPEDVNTSHPLKQRRRI). Over residues 347-356 (PPEDKPEDVN) the composition is skewed to basic and acidic residues.

Belongs to the RBM48 family. In terms of assembly, component of the minor spliceosome. Within this complex, interacts with ARMC7 and PRPF8/PRP8.

As a component of the minor spliceosome, involved in the splicing of U12-type introns in pre-mRNAs. The chain is RNA-binding protein 48 (RBM48) from Pongo abelii (Sumatran orangutan).